A 40-amino-acid chain; its full sequence is Proteinase inhibitor IIB (40 aa).

3 disulfides stabilise this stretch: Cys2-Cys16, Cys6-Cys28, and Cys12-Cys38.

It belongs to the protease inhibitor I20 (potato type II proteinase inhibitor) family.

It is found in the secreted. In terms of biological role, inhibits chymotrypsin and subtilisin strongly. The protein is Proteinase inhibitor IIB of Solanum tuberosum (Potato).